Consider the following 36-residue polypeptide: Endoglucanase Cel12A (36 aa).

Belongs to the glycosyl hydrolase 12 (cellulase H) family.

The protein resides in the secreted. The protein localises to the extracellular space. The enzyme catalyses Endohydrolysis of (1-&gt;4)-beta-D-glucosidic linkages in cellulose, lichenin and cereal beta-D-glucans.. Functionally, has carboxymethylcellulase activity. This is Endoglucanase Cel12A from Gloeophyllum trabeum (Brown rot fungus).